Reading from the N-terminus, the 121-residue chain is Large ribosomal subunit protein bL19 (121 aa).

The protein belongs to the bacterial ribosomal protein bL19 family.

This protein is located at the 30S-50S ribosomal subunit interface and may play a role in the structure and function of the aminoacyl-tRNA binding site. This chain is Large ribosomal subunit protein bL19, found in Symbiobacterium thermophilum (strain DSM 24528 / JCM 14929 / IAM 14863 / T).